Reading from the N-terminus, the 227-residue chain is Cytochrome c oxidase subunit 2 (227 aa).

Residues 1–14 are Mitochondrial intermembrane-facing; the sequence is MAYPFQLGFQDASS. The chain crosses the membrane as a helical span at residues 15–45; sequence PIMEELLHFHDHTLMIVFLISSLVLYIISLM. Over 46–59 the chain is Mitochondrial matrix; that stretch reads LTTKLTHTSTMDAQ. Residues 60 to 87 form a helical membrane-spanning segment; sequence EVETIWTILPAIILILIALPSLRILYMM. At 88–227 the chain is on the mitochondrial intermembrane side; it reads DEINNPSLTV…HFENWSLSMI (140 aa). Cu cation-binding residues include histidine 161, cysteine 196, glutamate 198, cysteine 200, histidine 204, and methionine 207. Residue glutamate 198 coordinates Mg(2+).

The protein belongs to the cytochrome c oxidase subunit 2 family. Component of the cytochrome c oxidase (complex IV, CIV), a multisubunit enzyme composed of 14 subunits. The complex is composed of a catalytic core of 3 subunits MT-CO1, MT-CO2 and MT-CO3, encoded in the mitochondrial DNA, and 11 supernumerary subunits COX4I, COX5A, COX5B, COX6A, COX6B, COX6C, COX7A, COX7B, COX7C, COX8 and NDUFA4, which are encoded in the nuclear genome. The complex exists as a monomer or a dimer and forms supercomplexes (SCs) in the inner mitochondrial membrane with NADH-ubiquinone oxidoreductase (complex I, CI) and ubiquinol-cytochrome c oxidoreductase (cytochrome b-c1 complex, complex III, CIII), resulting in different assemblies (supercomplex SCI(1)III(2)IV(1) and megacomplex MCI(2)III(2)IV(2)). Found in a complex with TMEM177, COA6, COX18, COX20, SCO1 and SCO2. Interacts with TMEM177 in a COX20-dependent manner. Interacts with COX20. Interacts with COX16. Cu cation serves as cofactor.

It is found in the mitochondrion inner membrane. The catalysed reaction is 4 Fe(II)-[cytochrome c] + O2 + 8 H(+)(in) = 4 Fe(III)-[cytochrome c] + 2 H2O + 4 H(+)(out). Its function is as follows. Component of the cytochrome c oxidase, the last enzyme in the mitochondrial electron transport chain which drives oxidative phosphorylation. The respiratory chain contains 3 multisubunit complexes succinate dehydrogenase (complex II, CII), ubiquinol-cytochrome c oxidoreductase (cytochrome b-c1 complex, complex III, CIII) and cytochrome c oxidase (complex IV, CIV), that cooperate to transfer electrons derived from NADH and succinate to molecular oxygen, creating an electrochemical gradient over the inner membrane that drives transmembrane transport and the ATP synthase. Cytochrome c oxidase is the component of the respiratory chain that catalyzes the reduction of oxygen to water. Electrons originating from reduced cytochrome c in the intermembrane space (IMS) are transferred via the dinuclear copper A center (CU(A)) of subunit 2 and heme A of subunit 1 to the active site in subunit 1, a binuclear center (BNC) formed by heme A3 and copper B (CU(B)). The BNC reduces molecular oxygen to 2 water molecules using 4 electrons from cytochrome c in the IMS and 4 protons from the mitochondrial matrix. This Oryctolagus cuniculus (Rabbit) protein is Cytochrome c oxidase subunit 2 (MT-CO2).